The sequence spans 120 residues: cAMP-responsive element-binding protein-like 2 (120 aa).

The segment at 1–24 (MDDSKVVGGKVKKPGKRGRKPAKI) is disordered. Positions 10–21 (KVKKPGKRGRKP) are enriched in basic residues. In terms of domain architecture, bZIP spans 23–86 (KIDLKAKLER…MAMDQGKIPS (64 aa)). The tract at residues 29-60 (KLERSRQSARECRARKKLRYQYLEELVSSRER) is basic motif. Positions 62–69 (ICALREEL) are leucine-zipper. The tract at residues 93 to 120 (TGEEQNKSQQNSSRHTKAGKTDANSNSW) is disordered.

It belongs to the bZIP family. ATF subfamily. As to quaternary structure, interacts with CREB1; regulates CREB1 phosphorylation, stability and transcriptional activity. In terms of processing, phosphorylated by AMPK.

It localises to the nucleus. Functionally, probable regulator of CREB1 transcriptional activity which is involved in adipose cells differentiation. May also play a regulatory role in the cell cycle. Identification in a chromosomal region frequently deleted in various cancers suggests that it might act as a tumor suppressor. This Homo sapiens (Human) protein is cAMP-responsive element-binding protein-like 2 (CREBL2).